The chain runs to 79 residues: Protein SIP18 (79 aa).

The disordered stretch occupies residues 1 to 79 (MSNMMNKFAE…DWKTYENMKK (79 aa)). A compositionally biased stretch (basic and acidic residues) spans 8 to 20 (FAEKLQGNDDSHQ).

The chain is Protein SIP18 (SIP18) from Saccharomyces cerevisiae (strain ATCC 204508 / S288c) (Baker's yeast).